Consider the following 415-residue polypeptide: Acrosin (415 aa).

Residues 1–16 form the signal peptide; sequence MLPTAVLLVLAVSVAA. N-linked (GlcNAc...) asparagine glycosylation occurs at N19. Cystine bridges form between C22-C152, C26-C160, C71-C87, C175-C244, C207-C223, and C234-C264. The region spanning 40–288 is the Peptidase S1 domain; sequence VVGGMSAEPG…YLNWIASKIG (249 aa). Active-site charge relay system residues include H86 and D140. N-linked (GlcNAc...) asparagine glycosylation is present at N208. S238 (charge relay system) is an active-site residue. Disordered regions lie at residues 296–376 and 395–415; these read QLGT…PPQA and FSSG…LPAS. Pro residues-rich tracts occupy residues 300–312 and 328–367; these read PPRP…PVRP and PPGP…PPPQ. The propeptide at 339 to 415 is pro-rich; sequence PRPPAPPPAP…TTDLQELPAS (77 aa). Positions 395 to 409 are enriched in polar residues; the sequence is FSSGRSYYETETTDL.

This sequence belongs to the peptidase S1 family. As to quaternary structure, heavy chain (catalytic) and a light chain linked by two disulfide bonds. Forms a heterodimer with SERPINA5.

It catalyses the reaction Preferential cleavage: Arg-|-Xaa, Lys-|-Xaa.. Its activity is regulated as follows. Inhibited by SERPINA5. Functionally, acrosin is the major protease of mammalian spermatozoa. It is a serine protease of trypsin-like cleavage specificity, it is synthesized in a zymogen form, proacrosin and stored in the acrosome. This is Acrosin (ACR) from Sus scrofa (Pig).